The chain runs to 354 residues: Ubiquinol oxidase 1a, mitochondrial (354 aa).

Residues 1–62 (MMITRGGAKA…RAPTIGGMRF (62 aa)) constitute a mitochondrion transit peptide. The tract at residues 68 to 99 (LGEKTPMKEEDANQKKTENESTGGDAAGGNNK) is disordered. Residues 72–86 (TPMKEEDANQKKTEN) show a composition bias toward basic and acidic residues. A helical membrane pass occupies residues 179–199 (AMMLETVAAVPGMVGGMLLHC). Residues Glu183, Glu222, and His225 each coordinate Fe cation. Residues 241-261 (ALVITVQGVFFNAYFLGYLIS) traverse the membrane as a helical segment. Positions 273, 324, and 327 each coordinate Fe cation.

It belongs to the alternative oxidase family. In terms of assembly, homodimer; disulfide-linked. Requires Fe cation as cofactor. As to expression, expressed in roots, stems, cotyledons, leaves and flowers. High expression in sepals.

Its subcellular location is the mitochondrion inner membrane. The enzyme catalyses 2 a ubiquinol + O2 = 2 a ubiquinone + 2 H2O. With respect to regulation, when the two monomeric subunits are covalently linked by a S-S bond, the enzyme is essentially inactive. When the disulfide bond is reduced, its component sulfhydryls can associate with K-keto acids through formation of a thiohemiacetal, resulting in enzyme activation. Activated by glyoxylate, irrespective to the substitution found at Cys-127. That suggests the presence of a second activation site, possibly Cys-177. Functionally, catalyzes the cyanide-resistant oxidation of ubiquinol and the reduction of molecular oxygen to water, but does not translocate protons and consequently is not linked to oxidative phosphorylation. Increases respiration when the cytochrome respiratory pathway is restricted, or in response to low temperatures. In Arabidopsis thaliana (Mouse-ear cress), this protein is Ubiquinol oxidase 1a, mitochondrial (AOX1A).